A 213-amino-acid polypeptide reads, in one-letter code: Glycerol-3-phosphate acyltransferase (213 aa).

The next 6 helical transmembrane spans lie at 3–23, 54–76, 83–100, 110–130, 142–162, and 163–183; these read ILLL…LWIG, TITF…WLGI, IIGF…FTGF, AGVL…VFAL, SITA…IHFL, and LDGY…VIIF.

The protein belongs to the PlsY family. In terms of assembly, probably interacts with PlsX.

It is found in the cell membrane. It carries out the reaction an acyl phosphate + sn-glycerol 3-phosphate = a 1-acyl-sn-glycero-3-phosphate + phosphate. Its pathway is lipid metabolism; phospholipid metabolism. Catalyzes the transfer of an acyl group from acyl-phosphate (acyl-PO(4)) to glycerol-3-phosphate (G3P) to form lysophosphatidic acid (LPA). This enzyme utilizes acyl-phosphate as fatty acyl donor, but not acyl-CoA or acyl-ACP. This is Glycerol-3-phosphate acyltransferase from Streptococcus thermophilus (strain ATCC BAA-491 / LMD-9).